Consider the following 613-residue polypeptide: Dihydroxy-acid dehydratase (613 aa).

A Mg(2+)-binding site is contributed by Asp-81. Cys-122 provides a ligand contact to [2Fe-2S] cluster. Residues Asp-123 and Lys-124 each coordinate Mg(2+). Lys-124 carries the post-translational modification N6-carboxylysine. Cys-195 is a binding site for [2Fe-2S] cluster. Glu-491 lines the Mg(2+) pocket. The Proton acceptor role is filled by Ser-517.

Belongs to the IlvD/Edd family. Homodimer. [2Fe-2S] cluster serves as cofactor. Requires Mg(2+) as cofactor.

It catalyses the reaction (2R)-2,3-dihydroxy-3-methylbutanoate = 3-methyl-2-oxobutanoate + H2O. It carries out the reaction (2R,3R)-2,3-dihydroxy-3-methylpentanoate = (S)-3-methyl-2-oxopentanoate + H2O. Its pathway is amino-acid biosynthesis; L-isoleucine biosynthesis; L-isoleucine from 2-oxobutanoate: step 3/4. It participates in amino-acid biosynthesis; L-valine biosynthesis; L-valine from pyruvate: step 3/4. Functionally, functions in the biosynthesis of branched-chain amino acids. Catalyzes the dehydration of (2R,3R)-2,3-dihydroxy-3-methylpentanoate (2,3-dihydroxy-3-methylvalerate) into 2-oxo-3-methylpentanoate (2-oxo-3-methylvalerate) and of (2R)-2,3-dihydroxy-3-methylbutanoate (2,3-dihydroxyisovalerate) into 2-oxo-3-methylbutanoate (2-oxoisovalerate), the penultimate precursor to L-isoleucine and L-valine, respectively. This chain is Dihydroxy-acid dehydratase, found in Photobacterium profundum (strain SS9).